Here is a 128-residue protein sequence, read N- to C-terminus: Group 2 truncated hemoglobin GlbO (128 aa).

The isodityrosine (Tyr-Tyr) cross-link spans 23–36 (YAQVAEDEVLRRVY). At Tyr36 the chain carries 3',4'-dihydroxyphenylalanine. His75 serves as a coordination point for heme.

Belongs to the truncated hemoglobin family. Group II subfamily. In terms of assembly, homododecamer. Heme serves as cofactor. Contains L-DOPA (3',4'-dihydroxyphenylalanine).

This chain is Group 2 truncated hemoglobin GlbO (glbO), found in Mycobacterium bovis (strain ATCC BAA-935 / AF2122/97).